Here is a 1166-residue protein sequence, read N- to C-terminus: ATP-dependent helicase/deoxyribonuclease subunit B (1166 aa).

Positions 1-285 (MGAVFLSGRS…VRLEETKRHR (285 aa)) constitute a UvrD-like helicase ATP-binding domain. 8–15 (GRSGSGKT) provides a ligand contact to ATP. The region spanning 279-586 (EETKRHRHHP…KFALIPPALD (308 aa)) is the UvrD-like helicase C-terminal domain. [4Fe-4S] cluster contacts are provided by Cys-801, Cys-1121, Cys-1124, and Cys-1130.

The protein belongs to the helicase family. AddB/RexB type 1 subfamily. Heterodimer of AddA and AddB. Requires Mg(2+) as cofactor. [4Fe-4S] cluster serves as cofactor.

The heterodimer acts as both an ATP-dependent DNA helicase and an ATP-dependent, dual-direction single-stranded exonuclease. Recognizes the chi site generating a DNA molecule suitable for the initiation of homologous recombination. The AddB subunit has 5' -&gt; 3' nuclease activity but not helicase activity. This Bacillus licheniformis (strain ATCC 14580 / DSM 13 / JCM 2505 / CCUG 7422 / NBRC 12200 / NCIMB 9375 / NCTC 10341 / NRRL NRS-1264 / Gibson 46) protein is ATP-dependent helicase/deoxyribonuclease subunit B.